A 76-amino-acid chain; its full sequence is uncharacterized protein (76 aa).

Residues 18–38 (FISALFFFNAVCIVSDNLLII) form a helical membrane-spanning segment.

It localises to the cell membrane. This is an uncharacterized protein from Escherichia coli O6:H1 (strain CFT073 / ATCC 700928 / UPEC).